A 360-amino-acid polypeptide reads, in one-letter code: Flavone O-methyltransferase 1 (360 aa).

Residue 127-133 (MNQDKVL) coordinates substrate. Residues 159–177 (AFEYHGTDPRFNRVFNEGM) form a substrate binding region. S-adenosyl-L-methionine contacts are provided by Gly-205, Asp-228, Asp-248, Met-249, and Lys-262. The active-site Proton acceptor is the His-266.

It belongs to the class I-like SAM-binding methyltransferase superfamily. Cation-independent O-methyltransferase family. COMT subfamily. As to quaternary structure, homodimer.

In terms of biological role, flavone-specific O-methyltransferase with a preference for flavones &gt; flavonols. Active with tricetin, luteolin, quercitin and eriodictyol. Very low activity with phenylpropanoids (5-hydroxyferulic acid and caffeic acid). Catalyzes the sequential O-methylation of tricetin via 3'-O-methyltricetin, 3',5'-O-methyltricetin to 3',4',5'-O-trimethyltricetin. The sequence is that of Flavone O-methyltransferase 1 (OMT1) from Triticum aestivum (Wheat).